A 162-amino-acid chain; its full sequence is Probable chemoreceptor glutamine deamidase CheD (162 aa).

It belongs to the CheD family.

It carries out the reaction L-glutaminyl-[protein] + H2O = L-glutamyl-[protein] + NH4(+). Functionally, probably deamidates glutamine residues to glutamate on methyl-accepting chemotaxis receptors (MCPs), playing an important role in chemotaxis. This chain is Probable chemoreceptor glutamine deamidase CheD, found in Syntrophotalea carbinolica (strain DSM 2380 / NBRC 103641 / GraBd1) (Pelobacter carbinolicus).